A 231-amino-acid polypeptide reads, in one-letter code: Lipoprotein-releasing system ATP-binding protein LolD (231 aa).

Residues 6–231 enclose the ABC transporter domain; sequence LQVQAVSKSY…YLQAVAEHAQ (226 aa). 42–49 contributes to the ATP binding site; it reads GTSGSGKS.

Belongs to the ABC transporter superfamily. Lipoprotein translocase (TC 3.A.1.125) family. The complex is composed of two ATP-binding proteins (LolD) and two transmembrane proteins (LolC and LolE).

Its subcellular location is the cell inner membrane. Its function is as follows. Part of the ABC transporter complex LolCDE involved in the translocation of mature outer membrane-directed lipoproteins, from the inner membrane to the periplasmic chaperone, LolA. Responsible for the formation of the LolA-lipoprotein complex in an ATP-dependent manner. The protein is Lipoprotein-releasing system ATP-binding protein LolD of Shewanella sp. (strain MR-4).